The chain runs to 254 residues: Putative epimerase LsrE (254 aa).

Residues V14 to L34 form a helical membrane-spanning segment. A divalent metal cation is bound by residues H50, D52, and H81. The active-site Proton acceptor is D52. Substrate contacts are provided by residues H81, G166–S169, D199–S201, and G221–S222. Residue D199 coordinates a divalent metal cation. The active-site Proton donor is the D199.

This sequence belongs to the ribulose-phosphate 3-epimerase family. Requires a divalent metal cation as cofactor.

It is found in the cell membrane. The chain is Putative epimerase LsrE (lsrE) from Salmonella choleraesuis (strain SC-B67).